We begin with the raw amino-acid sequence, 234 residues long: uncharacterized protein (234 aa).

10–34 (VVTGASSGIGASIAETLANQGVKVV) contributes to the NADP(+) binding site. Residue serine 143 participates in substrate binding. Catalysis depends on tyrosine 156, which acts as the Proton acceptor.

The protein belongs to the short-chain dehydrogenases/reductases (SDR) family.

This is an uncharacterized protein from Staphylococcus saprophyticus subsp. saprophyticus (strain ATCC 15305 / DSM 20229 / NCIMB 8711 / NCTC 7292 / S-41).